The chain runs to 497 residues: Probable malate:quinone oxidoreductase (497 aa).

It belongs to the MQO family. FAD is required as a cofactor.

It catalyses the reaction (S)-malate + a quinone = a quinol + oxaloacetate. The protein operates within carbohydrate metabolism; tricarboxylic acid cycle; oxaloacetate from (S)-malate (quinone route): step 1/1. The protein is Probable malate:quinone oxidoreductase of Exiguobacterium sibiricum (strain DSM 17290 / CCUG 55495 / CIP 109462 / JCM 13490 / 255-15).